The following is a 596-amino-acid chain: Lamin-B2 (596 aa).

Residues 1–20 (MASLPPHAGPATPLSPTRLS) are disordered. Residues 1–26 (MASLPPHAGPATPLSPTRLSRLQEKE) are head. T12 is subject to Phosphothreonine. S15 bears the Phosphoserine mark. One can recognise an IF rod domain in the interval 24–380 (EKEELRELND…KLLEGEEERL (357 aa)). The segment at 27–61 (ELRELNDRLAHYIDRVRALELENDRLLLRISEKEE) is coil 1A. The residue at position 59 (K59) is an N6-acetyllysine; alternate. K59 participates in a covalent cross-link: Glycyl lysine isopeptide (Lys-Gly) (interchain with G-Cter in SUMO2); alternate. Positions 62 to 73 (VTTREVSGIKTL) are linker 1. Residues 74-207 (YESELADARR…AFSKSVFEEE (134 aa)) form a coil 1B region. Residues K173 and K233 each participate in a glycyl lysine isopeptide (Lys-Gly) (interchain with G-Cter in SUMO2) cross-link. Residues 208-234 (VRETRRRHERRLVEVDSSRQQEYDFKM) form a linker 2 region. Residues 235–378 (AQALEDLRSQ…YRKLLEGEEE (144 aa)) form a coil 2 region. Phosphoserine occurs at positions 294 and 385. The segment at 376 to 440 (EEERLKLSPS…ASRVSSGSRL (65 aa)) is disordered. The segment at 379 to 596 (RLKLSPSPSS…RTTSRGCRLM (218 aa)) is tail. Residues 382 to 403 (LSPSPSSRITISRATSSSSSSS) show a composition bias toward low complexity. O-linked (GlcNAc) threonine glycosylation is present at T391. A phosphoserine mark is found at S398, S400, and S402. Residue R413 is modified to Omega-N-methylarginine. The Nuclear localization signal motif lies at 415–420 (KRRRLE). Low complexity predominate over residues 425–439 (SGSPSRASRVSSGSR). The LTD domain maps to 438–559 (SRLAQQTVAT…VKAAKHSSVQ (122 aa)). K465 is covalently cross-linked (Glycyl lysine isopeptide (Lys-Gly) (interchain with G-Cter in SUMO2)). S473 is subject to Phosphoserine. The disordered stretch occupies residues 552-596 (AAKHSSVQGRENGEEEEEEEAEFGEEDLFHQQGDPRTTSRGCRLM). A compositionally biased stretch (acidic residues) spans 564 to 577 (GEEEEEEEAEFGEE). Over residues 585–596 (DPRTTSRGCRLM) the composition is skewed to polar residues. C593 is subject to Cysteine methyl ester. C593 is lipidated: S-farnesyl cysteine. The propeptide at 594 to 596 (RLM) is removed in mature form.

It belongs to the intermediate filament family. Dimer. Lamin dimers then assemble into dimeric head-to-tail polymers. Ultimately, two head-to-tail polymers assemble laterally into a protofilament with a uniformly shaped rod of 3.5 nm in diameter. Interacts with TMEM43. In terms of processing, B-type lamins undergo a series of modifications, such as farnesylation and phosphorylation. Increased phosphorylation of the lamins occurs before envelope disintegration and probably plays a role in regulating lamin associations. Post-translationally, phosphorylation plays a key role in lamin organization, subcellular localization and nuclear envelope disintegration. Phosphorylation by CDK1 at Ser-15 and Ser-385 at the onset of mitosis drives lamin disassembly and nuclear envelope breakdown. As to expression, germ cell-specific.

Its subcellular location is the nucleus lamina. Lamins are intermediate filament proteins that assemble into a filamentous meshwork, and which constitute the major components of the nuclear lamina, a fibrous layer on the nucleoplasmic side of the inner nuclear membrane. Lamins provide a framework for the nuclear envelope, bridging the nuclear envelope and chromatin, thereby playing an important role in nuclear assembly, chromatin organization, nuclear membrane and telomere dynamics. The structural integrity of the lamina is strictly controlled by the cell cycle, as seen by the disintegration and formation of the nuclear envelope in prophase and telophase, respectively. The chain is Lamin-B2 (Lmnb2) from Mus musculus (Mouse).